The sequence spans 339 residues: Serpentine receptor class delta-19 (339 aa).

7 helical membrane-spanning segments follow: residues 2–22 (IIFF…LNLL), 39–59 (ATLI…DLFI), 90–110 (VGLS…LISF), 130–150 (ITIM…TLFV), 187–207 (VYAV…IFVL), 242–262 (IIPM…SGLL), and 270–290 (SIFS…LYFV).

It belongs to the nematode receptor-like protein srd family.

Its subcellular location is the membrane. In Caenorhabditis elegans, this protein is Serpentine receptor class delta-19 (srd-19).